The chain runs to 234 residues: Enolase-phosphatase E1 (234 aa).

Mg(2+) contacts are provided by D10 and E12. Substrate is bound by residues 125–126 (SS) and K162. Residue D188 participates in Mg(2+) binding.

Belongs to the HAD-like hydrolase superfamily. MasA/MtnC family. Monomer. Requires Mg(2+) as cofactor.

It is found in the cytoplasm. It localises to the nucleus. It carries out the reaction 5-methylsulfanyl-2,3-dioxopentyl phosphate + H2O = 1,2-dihydroxy-5-(methylsulfanyl)pent-1-en-3-one + phosphate. The protein operates within amino-acid biosynthesis; L-methionine biosynthesis via salvage pathway; L-methionine from S-methyl-5-thio-alpha-D-ribose 1-phosphate: step 3/6. Its pathway is amino-acid biosynthesis; L-methionine biosynthesis via salvage pathway; L-methionine from S-methyl-5-thio-alpha-D-ribose 1-phosphate: step 4/6. In terms of biological role, bifunctional enzyme that catalyzes the enolization of 2,3-diketo-5-methylthiopentyl-1-phosphate (DK-MTP-1-P) into the intermediate 2-hydroxy-3-keto-5-methylthiopentenyl-1-phosphate (HK-MTPenyl-1-P), which is then dephosphorylated to form the acireductone 1,2-dihydroxy-3-keto-5-methylthiopentene (DHK-MTPene). The protein is Enolase-phosphatase E1 of Sordaria macrospora (strain ATCC MYA-333 / DSM 997 / K(L3346) / K-hell).